Consider the following 501-residue polypeptide: Probable Xaa-Pro aminopeptidase pepP (501 aa).

The disordered stretch occupies residues 1–25 (MNYHSFLPLRRSSLSHSTTPPSKSR). The segment covering 12-25 (SSLSHSTTPPSKSR) has biased composition (polar residues). Residues Asp-298, Asp-309, Glu-432, and Glu-472 each coordinate Mn(2+).

The protein belongs to the peptidase M24B family. The cofactor is Mn(2+).

The enzyme catalyses Release of any N-terminal amino acid, including proline, that is linked to proline, even from a dipeptide or tripeptide.. Functionally, catalyzes the removal of a penultimate prolyl residue from the N-termini of peptides. This Metarhizium acridum (strain CQMa 102) protein is Probable Xaa-Pro aminopeptidase pepP (pepP).